The following is a 348-amino-acid chain: 2-methyl-6-phytyl-1,4-hydroquinone methyltransferase 2, chloroplastic (348 aa).

A disordered region spans residues 1–48; the sequence is MAMASSAYAPAGGVGTHSAPGRIRPPRGLGFSTTTTKSRPLVLTRRGG. A chloroplast-targeting transit peptide spans 1–59; that stretch reads MAMASSAYAPAGGVGTHSAPGRIRPPRGLGFSTTTTKSRPLVLTRRGGGGGNISVARLR. Over 60 to 317 the chain is Chloroplast intermembrane; that stretch reads CAASSSSAAA…PVNPITFLFR (258 aa). The interval 125–134 is SAM motif I; that stretch reads VVDVGGGTGF. The segment at 170–183 is SAM motif II; sequence VTIMEGDAEDLPFP. The segment at 211 to 224 is SAM motif III; that stretch reads RVLRLGGVACMIGP. A helical transmembrane segment spans residues 318 to 338; the sequence is FLMGTICAAYYVLVPIYMWIK. The Stromal segment spans residues 339–348; the sequence is DQIVPKGMPI.

The protein belongs to the class I-like SAM-binding methyltransferase superfamily. MPBQ/MBSQ MT family.

The protein localises to the plastid. The protein resides in the chloroplast inner membrane. It catalyses the reaction 2-methyl-6-phytyl-1,4-benzene-1,4-diol + S-adenosyl-L-methionine = 2,3-dimethyl-6-phytylbenzene-1,4-diol + S-adenosyl-L-homocysteine + H(+). It carries out the reaction 2-methyl-6-(all-trans-nonaprenyl)benzene-1,4-diol + S-adenosyl-L-methionine = plastoquinol-9 + S-adenosyl-L-homocysteine + H(+). The catalysed reaction is 6-geranylgeranyl-2-methylbenzene-1,4-diol + S-adenosyl-L-methionine = 6-geranylgeranyl-2,3-dimethylbenzene-1,4-diol + S-adenosyl-L-homocysteine + H(+). It functions in the pathway cofactor biosynthesis; tocopherol biosynthesis. In terms of biological role, involved in a key methylation step in both tocopherols (vitamin E) and plastoquinone synthesis. Catalyzes the conversion of 2-methyl-6-phytyl-1,4-hydroquinone (MPBQ) to 2,3-dimethyl-6-phytyl-1,4-hydroquinone (DMPQ, a substrate for tocopherol cyclase), and 2-methyl-6-solanyl-1,4-benzoquinone (MSBQ) to plastoquinone. This chain is 2-methyl-6-phytyl-1,4-hydroquinone methyltransferase 2, chloroplastic, found in Oryza sativa subsp. japonica (Rice).